We begin with the raw amino-acid sequence, 117 residues long: Small ribosomal subunit protein bS6 (117 aa).

Residues 97 to 117 (TEEPSAILTKKDDRRGRRERN) form a disordered region.

The protein belongs to the bacterial ribosomal protein bS6 family.

Its function is as follows. Binds together with bS18 to 16S ribosomal RNA. This is Small ribosomal subunit protein bS6 from Maricaulis maris (strain MCS10) (Caulobacter maris).